The chain runs to 79 residues: CDC42 small effector protein 1-B (79 aa).

S-palmitoyl cysteine attachment occurs at residues cysteine 10 and cysteine 11. Positions 30–43 constitute a CRIB domain; that stretch reads IGEPMNFVHLTHIG. The segment at 41-79 is disordered; the sequence is HIGSGDMGASDGLPKAGTVQEQMRSKCGRDRQWSNSRVL. A compositionally biased stretch (basic and acidic residues) spans 63-72; sequence MRSKCGRDRQ.

It belongs to the CDC42SE/SPEC family.

The protein localises to the cytoplasm. The protein resides in the cytoskeleton. It localises to the cell membrane. Its function is as follows. Probably involved in the organization of the actin cytoskeleton by acting downstream of CDC42, inducing actin filament assembly. This is CDC42 small effector protein 1-B (cdc42se1-b) from Xenopus laevis (African clawed frog).